A 657-amino-acid chain; its full sequence is Glycogen debranching enzyme (657 aa).

D336 functions as the Nucleophile in the catalytic mechanism. The Proton donor role is filled by E371. Residues 460-479 form a disordered region; the sequence is ANGEENRDGTNNNYSNNHGK.

The protein belongs to the glycosyl hydrolase 13 family.

The catalysed reaction is Hydrolysis of (1-&gt;6)-alpha-D-glucosidic linkages to branches with degrees of polymerization of three or four glucose residues in limit dextrin.. The protein operates within glycan degradation; glycogen degradation. In terms of biological role, removes maltotriose and maltotetraose chains that are attached by 1,6-alpha-linkage to the limit dextrin main chain, generating a debranched limit dextrin. This chain is Glycogen debranching enzyme, found in Escherichia coli O17:K52:H18 (strain UMN026 / ExPEC).